A 91-amino-acid chain; its full sequence is PqqA binding protein (91 aa).

This sequence belongs to the PqqD family. As to quaternary structure, monomer. Interacts with PqqE.

Its pathway is cofactor biosynthesis; pyrroloquinoline quinone biosynthesis. In terms of biological role, functions as a PqqA binding protein and presents PqqA to PqqE, in the pyrroloquinoline quinone (PQQ) biosynthetic pathway. This Pseudomonas entomophila (strain L48) protein is PqqA binding protein.